The sequence spans 377 residues: Leucine aminopeptidase A (377 aa).

Positions 1 to 18 (MRFLPCIATLAATASALA) are cleaved as a signal peptide. Residues 19–79 (IGDHVRSDDQ…SNKKQKLAVT (61 aa)) constitute a propeptide that is removed on maturation. A glycan (N-linked (GlcNAc...) asparagine) is linked at Asn-87. Residues His-176, Asp-195, Glu-234, and Asp-261 each contribute to the Zn(2+) site. Residue Asn-288 is glycosylated (N-linked (GlcNAc...) asparagine). Residues Cys-310 and Cys-314 are joined by a disulfide bond. His-343 contributes to the Zn(2+) binding site.

It belongs to the peptidase M28 family. M28E subfamily. Monomer. It depends on Zn(2+) as a cofactor.

The protein resides in the secreted. Its activity is regulated as follows. Calcium, magnesium and manganese cations reduce peptidase activity to 20.3-51.3 percent. The metal ion chelating reagent EDTA almost completely inhibits activity. The protease inhibitor bacitracin and the aminopeptidase B inhibitor bestatin, as well as DTT and beta-mercaptoethanol act also as lap A inhibitorsD. In terms of biological role, extracellular aminopeptidase that allows assimilation of proteinaceous substrates. The protein is Leucine aminopeptidase A (lapA) of Aspergillus oryzae (strain ATCC 42149 / RIB 40) (Yellow koji mold).